The following is a 339-amino-acid chain: Anthranilate phosphoribosyltransferase (339 aa).

5-phospho-alpha-D-ribose 1-diphosphate-binding positions include Gly-81, Gly-84–Asp-85, Ser-89, Asn-91–Thr-94, Lys-109–Ser-117, and Ala-121. Gly-81 serves as a coordination point for anthranilate. Ser-93 contacts Mg(2+). Asn-112 is a binding site for anthranilate. Arg-167 is an anthranilate binding site. The Mg(2+) site is built by Asp-226 and Glu-227.

This sequence belongs to the anthranilate phosphoribosyltransferase family. As to quaternary structure, homodimer. Mg(2+) is required as a cofactor.

It carries out the reaction N-(5-phospho-beta-D-ribosyl)anthranilate + diphosphate = 5-phospho-alpha-D-ribose 1-diphosphate + anthranilate. The protein operates within amino-acid biosynthesis; L-tryptophan biosynthesis; L-tryptophan from chorismate: step 2/5. Catalyzes the transfer of the phosphoribosyl group of 5-phosphorylribose-1-pyrophosphate (PRPP) to anthranilate to yield N-(5'-phosphoribosyl)-anthranilate (PRA). This Rhodopseudomonas palustris (strain BisA53) protein is Anthranilate phosphoribosyltransferase.